The primary structure comprises 132 residues: Glycine cleavage system H protein (132 aa).

A Lipoyl-binding domain is found at Arg24–Glu106. Lys65 bears the N6-lipoyllysine mark.

This sequence belongs to the GcvH family. In terms of assembly, the glycine cleavage system is composed of four proteins: P, T, L and H. (R)-lipoate serves as cofactor.

In terms of biological role, the glycine cleavage system catalyzes the degradation of glycine. The H protein shuttles the methylamine group of glycine from the P protein to the T protein. The polypeptide is Glycine cleavage system H protein (Nocardia farcinica (strain IFM 10152)).